The following is a 130-amino-acid chain: Small ribosomal subunit protein uS8 (130 aa).

Belongs to the universal ribosomal protein uS8 family. In terms of assembly, part of the 30S ribosomal subunit. Contacts proteins S5 and S12.

In terms of biological role, one of the primary rRNA binding proteins, it binds directly to 16S rRNA central domain where it helps coordinate assembly of the platform of the 30S subunit. In Cellvibrio japonicus (strain Ueda107) (Pseudomonas fluorescens subsp. cellulosa), this protein is Small ribosomal subunit protein uS8.